An 82-amino-acid chain; its full sequence is Small ribosomal subunit protein bS16 (82 aa).

Belongs to the bacterial ribosomal protein bS16 family.

This Photorhabdus laumondii subsp. laumondii (strain DSM 15139 / CIP 105565 / TT01) (Photorhabdus luminescens subsp. laumondii) protein is Small ribosomal subunit protein bS16.